Reading from the N-terminus, the 102-residue chain is Small ribosomal subunit protein uS10 (102 aa).

The protein belongs to the universal ribosomal protein uS10 family. Part of the 30S ribosomal subunit.

Its function is as follows. Involved in the binding of tRNA to the ribosomes. This is Small ribosomal subunit protein uS10 from Malacoplasma penetrans (strain HF-2) (Mycoplasma penetrans).